The primary structure comprises 584 residues: Galectin-3-binding protein (584 aa).

Residues 1–18 form the signal peptide; the sequence is MTPPRLFWVWLLVAGTQG. Residues 24 to 124 enclose the SRCR domain; sequence MRLADGGATN…HERDAGVVCT (101 aa). Intrachain disulfides connect Cys-49/Cys-113, Cys-62/Cys-123, and Cys-93/Cys-103. Residue Asn-69 is glycosylated (N-linked (GlcNAc...) asparagine). 2 N-linked (GlcNAc...) asparagine glycosylation sites follow: Asn-125 and Asn-192. Positions 153-221 constitute a BTB domain; it reads CDLSISVNVQ…FYSRRIDITL (69 aa). One can recognise a BACK domain in the interval 260–359; the sequence is PLDLYAYAVA…MLPEELFELQ (100 aa). N-linked (GlcNAc...) asparagine glycosylation is found at Asn-361, Asn-397, Asn-550, and Asn-579.

Homodimers and homomultimers. The multimers form ring-like structures with a diameter of 30-40 nm. Binds LGALS1 and LGALS3. Binds ITGB1, COL4A1, COL5A1, COL6A1, FN1 and NID. Interacts with the gamma-tubulin ring complex (gamma-TuRC), composed of gamma-tubulin, TUBGCP2, TUBGCP3, TUBGCP4, TUBGCP5 and TUBGCP6. The unglycosylated form interacts with PDE4DIP; this interaction, which is PDE4DIP isoform-specific, may connect a pericentrosomal complex, made of AKAP9, CDK5RAP2, EB1/MAPRE1 and PDE4DIP, to the gamma-tubulin ring complex (gamma-TuRC) to promote microtubule assembly and acetylation.

It is found in the secreted. The protein resides in the extracellular space. Its subcellular location is the extracellular matrix. In terms of biological role, promotes integrin-mediated cell adhesion. May stimulate host defense against viruses and tumor cells. The protein is Galectin-3-binding protein (LGALS3BP) of Pongo abelii (Sumatran orangutan).